The chain runs to 147 residues: 3-dehydroquinate dehydratase (147 aa).

Catalysis depends on Y23, which acts as the Proton acceptor. Residues N74, H80, and D87 each coordinate substrate. The Proton donor role is filled by H100. Residues 101–102 and R111 contribute to the substrate site; that span reads LS.

It belongs to the type-II 3-dehydroquinase family. Homododecamer.

It carries out the reaction 3-dehydroquinate = 3-dehydroshikimate + H2O. The protein operates within metabolic intermediate biosynthesis; chorismate biosynthesis; chorismate from D-erythrose 4-phosphate and phosphoenolpyruvate: step 3/7. Catalyzes a trans-dehydration via an enolate intermediate. This is 3-dehydroquinate dehydratase from Clostridium botulinum (strain Loch Maree / Type A3).